A 154-amino-acid chain; its full sequence is Transcriptional repressor NrdR (154 aa).

A zinc finger spans residues 3-34 (CPTCKYNGTRVVDSRPADDGNSIRRRRECEKC). Residues 49–139 (LIVVKKDGAR…VYRQFKDISV (91 aa)) enclose the ATP-cone domain.

The protein belongs to the NrdR family. Zn(2+) serves as cofactor.

Its function is as follows. Negatively regulates transcription of bacterial ribonucleotide reductase nrd genes and operons by binding to NrdR-boxes. The polypeptide is Transcriptional repressor NrdR (Listeria innocua serovar 6a (strain ATCC BAA-680 / CLIP 11262)).